We begin with the raw amino-acid sequence, 99 residues long: Turripeptide OL71 (99 aa).

Contains 5 disulfide bonds. In terms of tissue distribution, expressed by the venom duct.

It is found in the secreted. Acts as a neurotoxin by inhibiting an ion channel. This Iotyrris olangoensis (Sea snail) protein is Turripeptide OL71.